Consider the following 500-residue polypeptide: Aspartyl/glutamyl-tRNA(Asn/Gln) amidotransferase subunit B (500 aa).

It belongs to the GatB/GatE family. GatB subfamily. Heterotrimer of A, B and C subunits.

It catalyses the reaction L-glutamyl-tRNA(Gln) + L-glutamine + ATP + H2O = L-glutaminyl-tRNA(Gln) + L-glutamate + ADP + phosphate + H(+). The enzyme catalyses L-aspartyl-tRNA(Asn) + L-glutamine + ATP + H2O = L-asparaginyl-tRNA(Asn) + L-glutamate + ADP + phosphate + 2 H(+). In terms of biological role, allows the formation of correctly charged Asn-tRNA(Asn) or Gln-tRNA(Gln) through the transamidation of misacylated Asp-tRNA(Asn) or Glu-tRNA(Gln) in organisms which lack either or both of asparaginyl-tRNA or glutaminyl-tRNA synthetases. The reaction takes place in the presence of glutamine and ATP through an activated phospho-Asp-tRNA(Asn) or phospho-Glu-tRNA(Gln). This Clavibacter michiganensis subsp. michiganensis (strain NCPPB 382) protein is Aspartyl/glutamyl-tRNA(Asn/Gln) amidotransferase subunit B.